Consider the following 515-residue polypeptide: 1-pyrroline-5-carboxylate dehydrogenase (515 aa).

Residues Glu286 and Cys320 contribute to the active site.

This sequence belongs to the aldehyde dehydrogenase family. RocA subfamily.

It catalyses the reaction L-glutamate 5-semialdehyde + NAD(+) + H2O = L-glutamate + NADH + 2 H(+). The protein operates within amino-acid degradation; L-proline degradation into L-glutamate; L-glutamate from L-proline: step 2/2. The chain is 1-pyrroline-5-carboxylate dehydrogenase from Geobacillus thermodenitrificans (strain NG80-2).